Reading from the N-terminus, the 299-residue chain is Recombination-associated protein RdgC (299 aa).

Belongs to the RdgC family.

The protein localises to the cytoplasm. It localises to the nucleoid. May be involved in recombination. In Cupriavidus necator (strain ATCC 17699 / DSM 428 / KCTC 22496 / NCIMB 10442 / H16 / Stanier 337) (Ralstonia eutropha), this protein is Recombination-associated protein RdgC.